We begin with the raw amino-acid sequence, 74 residues long: MEKKTVAALSFLFIVLFVAQEIAVTEAKTCENLSDSFKGPCIPDGNCNKHCKEKEHLLSGRCRDDFRCWCTRNC.

The signal sequence occupies residues 1–27; that stretch reads MEKKTVAALSFLFIVLFVAQEIAVTEA. 4 disulfides stabilise this stretch: Cys-30–Cys-74, Cys-41–Cys-62, Cys-47–Cys-68, and Cys-51–Cys-70.

The protein resides in the secreted. Functionally, has antifungal activity against the phytopathogenic fungus A.niger VKM F-2259, but not against A.alternata VKM F-3047. Does not inhibit trypsin or chymotrypsin. In Lens culinaris subsp. culinaris (Cultivated lentil), this protein is Defensin Lc-def.